Consider the following 202-residue polypeptide: Putative NADH dehydrogenase/NAD(P)H nitroreductase SCO7141 (202 aa).

The protein belongs to the nitroreductase family. HadB/RutE subfamily. FMN serves as cofactor.

The sequence is that of Putative NADH dehydrogenase/NAD(P)H nitroreductase SCO7141 from Streptomyces coelicolor (strain ATCC BAA-471 / A3(2) / M145).